A 56-amino-acid chain; its full sequence is Small ribosomal subunit protein bS21 (56 aa).

It belongs to the bacterial ribosomal protein bS21 family.

The protein is Small ribosomal subunit protein bS21 (rpsU) of Geobacillus stearothermophilus (Bacillus stearothermophilus).